A 60-amino-acid chain; its full sequence is Large ribosomal subunit protein uL30 (60 aa).

The protein belongs to the universal ribosomal protein uL30 family. As to quaternary structure, part of the 50S ribosomal subunit.

This chain is Large ribosomal subunit protein uL30, found in Leptothrix cholodnii (strain ATCC 51168 / LMG 8142 / SP-6) (Leptothrix discophora (strain SP-6)).